Reading from the N-terminus, the 363-residue chain is NAD(P)H-quinone oxidoreductase subunit 1, chloroplastic (363 aa).

The next 8 membrane-spanning stretches (helical) occupy residues 26 to 46 (FVWI…GVLV), 96 to 116 (WLFA…FLVI), 127 to 147 (ISIG…GLLV), 175 to 195 (LALC…IEIV), 203 to 223 (ILGW…ISAL), 253 to 273 (FGLF…FVTI), 303 to 323 (GLIA…ASIL), and 343 to 363 (FLLP…LALL).

The protein belongs to the complex I subunit 1 family. NDH is composed of at least 16 different subunits, 5 of which are encoded in the nucleus.

It is found in the plastid. Its subcellular location is the chloroplast thylakoid membrane. It carries out the reaction a plastoquinone + NADH + (n+1) H(+)(in) = a plastoquinol + NAD(+) + n H(+)(out). It catalyses the reaction a plastoquinone + NADPH + (n+1) H(+)(in) = a plastoquinol + NADP(+) + n H(+)(out). In terms of biological role, NDH shuttles electrons from NAD(P)H:plastoquinone, via FMN and iron-sulfur (Fe-S) centers, to quinones in the photosynthetic chain and possibly in a chloroplast respiratory chain. The immediate electron acceptor for the enzyme in this species is believed to be plastoquinone. Couples the redox reaction to proton translocation, and thus conserves the redox energy in a proton gradient. The sequence is that of NAD(P)H-quinone oxidoreductase subunit 1, chloroplastic from Zygnema circumcarinatum (Green alga).